A 441-amino-acid chain; its full sequence is Ribulose bisphosphate carboxylase large chain (441 aa).

Residues Asn-89 and Thr-139 each coordinate substrate. Lys-141 (proton acceptor) is an active-site residue. Lys-143 is a substrate binding site. The Mg(2+) site is built by Lys-167, Asp-169, and Glu-170. Position 167 is an N6-carboxylysine (Lys-167). Residue His-260 is the Proton acceptor of the active site. Residues Arg-261, His-293, and Ser-345 each contribute to the substrate site.

Belongs to the RuBisCO large chain family. Type I subfamily. Heterohexadecamer of 8 large chains and 8 small chains; disulfide-linked. The disulfide link is formed within the large subunit homodimers. Mg(2+) serves as cofactor. The disulfide bond which can form in the large chain dimeric partners within the hexadecamer appears to be associated with oxidative stress and protein turnover.

It is found in the plastid. The protein resides in the chloroplast. It catalyses the reaction 2 (2R)-3-phosphoglycerate + 2 H(+) = D-ribulose 1,5-bisphosphate + CO2 + H2O. It carries out the reaction D-ribulose 1,5-bisphosphate + O2 = 2-phosphoglycolate + (2R)-3-phosphoglycerate + 2 H(+). Functionally, ruBisCO catalyzes two reactions: the carboxylation of D-ribulose 1,5-bisphosphate, the primary event in carbon dioxide fixation, as well as the oxidative fragmentation of the pentose substrate in the photorespiration process. Both reactions occur simultaneously and in competition at the same active site. The chain is Ribulose bisphosphate carboxylase large chain from Coriandrum sativum (Coriander).